The following is a 432-amino-acid chain: Short/branched chain specific acyl-CoA dehydrogenase, mitochondrial (432 aa).

A mitochondrion-targeting transit peptide spans 1–33 (MAVSAFQLWRAGGLLRRNFLTHSSSWKIPPRVL). Lysine 70 is subject to N6-acetyllysine; alternate. Residue lysine 70 is modified to N6-succinyllysine; alternate. FAD is bound by residues 174 to 183 (FCLSEAGAGS) and 207 to 209 (WIS). Residue serine 183 coordinates substrate. Serine 183 is subject to Phosphoserine. Tyrosine 229 contributes to the substrate binding site. N6-succinyllysine is present on lysine 278. Tyrosine 283 lines the substrate pocket. Lysine 284 is modified (N6-acetyllysine; alternate). Residue lysine 284 is modified to N6-succinyllysine; alternate. 291 to 294 (NEGR) is a binding site for substrate. FAD is bound by residues arginine 319, glutamine 330, and 387-391 (EWMGG). Glutamate 414 serves as the catalytic Proton acceptor. 416–418 (TSN) contacts FAD. An N6-acetyllysine modification is found at lysine 426.

The protein belongs to the acyl-CoA dehydrogenase family. As to quaternary structure, homotetramer. The cofactor is FAD. As to expression, ubiquitously expressed.

Its subcellular location is the mitochondrion matrix. The catalysed reaction is 2-methylbutanoyl-CoA + oxidized [electron-transfer flavoprotein] + H(+) = (2E)-2-methylbut-2-enoyl-CoA + reduced [electron-transfer flavoprotein]. The enzyme catalyses (2S)-2-methylbutanoyl-CoA + oxidized [electron-transfer flavoprotein] + H(+) = (2E)-2-methylbut-2-enoyl-CoA + reduced [electron-transfer flavoprotein]. It carries out the reaction (2R)-2-methylbutanoyl-CoA + oxidized [electron-transfer flavoprotein] + H(+) = ethylacryloyl-CoA + reduced [electron-transfer flavoprotein]. It catalyses the reaction butanoyl-CoA + oxidized [electron-transfer flavoprotein] + H(+) = (2E)-butenoyl-CoA + reduced [electron-transfer flavoprotein]. The catalysed reaction is 2-methylpropanoyl-CoA + oxidized [electron-transfer flavoprotein] + H(+) = 2-methylpropenoyl-CoA + reduced [electron-transfer flavoprotein]. The enzyme catalyses hexanoyl-CoA + oxidized [electron-transfer flavoprotein] + H(+) = (2E)-hexenoyl-CoA + reduced [electron-transfer flavoprotein]. It carries out the reaction valproyl-CoA + oxidized [electron-transfer flavoprotein] + H(+) = (2E)-2-propylpent-2-enoyl-CoA + reduced [electron-transfer flavoprotein]. It functions in the pathway lipid metabolism; mitochondrial fatty acid beta-oxidation. It participates in amino-acid degradation; L-isoleucine degradation. Inhibited by N-ethylmaleimide, hydroxymercuribenzoate, methyl mercury iodide and heavy metals such as Hg2+, Cu2+, and Ag2+. Functionally, short and branched chain specific acyl-CoA dehydrogenase that catalyzes the removal of one hydrogen from C-2 and C-3 of the fatty acyl-CoA thioester, resulting in the formation of trans-2-enoyl-CoA. Among the different mitochondrial acyl-CoA dehydrogenases, acts specifically on short and branched chain acyl-CoA derivatives such as (S)-2-methylbutyryl-CoA as well as short straight chain acyl-CoAs such as butyryl-CoA. Plays an important role in the metabolism of L-isoleucine by catalyzing the dehydrogenation of 2-methylbutyryl-CoA, one of the steps of the L-isoleucine catabolic pathway. Can also act on valproyl-CoA, a metabolite of the valproic acid drug. The sequence is that of Short/branched chain specific acyl-CoA dehydrogenase, mitochondrial from Rattus norvegicus (Rat).